The primary structure comprises 922 residues: Band 3 anion transport protein (922 aa).

2 disordered regions span residues 1–36 (MEGP…TMSN) and 355–389 (QHPD…LRTR). Over 1–416 (MEGPGQDTED…LSDIRDALNP (416 aa)) the chain is Cytoplasmic. The segment covering 10-26 (DALRRSLDPEGYEDTKG) has biased composition (basic and acidic residues). Residues 27 to 36 (SRTSLGTMSN) show a composition bias toward polar residues. The helical transmembrane segment at 417-440 (QCLAAVIFIYFAALSPAITFGGLL) threads the bilayer. Residues 441-448 (GEKTRGMM) are Extracellular-facing. A helical membrane pass occupies residues 449–469 (GVSELLLSTSVQCLLFSLLSA). The Cytoplasmic segment spans residues 470-472 (QPL). The discontinuously helical transmembrane segment at 473 to 489 (LVVGFSGPLLVFEEAFF) threads the bilayer. Topologically, residues 490–498 (RFCEDHGLE) are extracellular. Residues 499–519 (YIVGRVWIGFWLILLVLLVVA) form a helical membrane-spanning segment. The Cytoplasmic portion of the chain corresponds to 520 to 531 (CEGTVLVRYLSR). Residues 532 to 554 (YTQEIFSFLISLIFIYETFAKLV) form a helical membrane-spanning segment. Over 555 to 581 (TIFEAHPLQQSYDTDVSTEPSVPKPNT) the chain is Extracellular. Residues 582 to 602 (ALLSLVLMAGTFFLALFLRQF) traverse the membrane as a helical segment. The Cytoplasmic portion of the chain corresponds to 603–613 (KNSVFLPGKVR). Residues 614-634 (RLIGDFGVPISIFVMALADFF) form a helical membrane-spanning segment. At 635–674 (IKDTYTQKLKVPRGLEVTNGTARGWFIHPMGSATPFPIWM) the chain is on the extracellular side. N-linked (GlcNAc...) asparagine glycosylation is present at asparagine 653. The helical transmembrane segment at 675 to 695 (MFASPVPALLVFILIFLETQI) threads the bilayer. At 696–711 (TTLIVSKPERKLVKGS) the chain is on the cytoplasmic side. A helical membrane pass occupies residues 712–730 (GFHLDLLLIVAMGGLAALF). The discontinuously helical transmembrane segment at 731-748 (GMPWLSATTVRTITHANA) threads the bilayer. Residues 749–771 (LTVVGKSAVPGERAHIVEVKEQR) lie on the Cytoplasmic side of the membrane. Helical transmembrane passes span 772–792 (LSGL…PILK) and 793–811 (YIPL…VTSL). Residues 812-849 (FGIQLFDRILLLLMPPKYHPKEPYVTRVKTWRITSSPL) are Cytoplasmic-facing. Positions 850–880 (TQILVVALLWGVKVSPASLRCPFVLVLTVPL) form an intramembrane region, discontinuously helical. Residues 881–922 (RRLLLPRIFSEIELKCLDTDDAVVTFEEAEGQDVYNEVQMPS) lie on the Cytoplasmic side of the membrane.

This sequence belongs to the anion exchanger (TC 2.A.31) family. A dimer in solution, it spans the membrane asymmetrically and appears to be tetrameric. As to expression, erythrocytes.

It localises to the cell membrane. The protein localises to the basolateral cell membrane. It carries out the reaction hydrogencarbonate(in) + chloride(out) = hydrogencarbonate(out) + chloride(in). Its function is as follows. Functions both as a transporter that mediates electroneutral anion exchange across the cell membrane and as a structural protein. Major integral membrane glycoprotein of the erythrocyte membrane; required for normal flexibility and stability of the erythrocyte membrane and for normal erythrocyte shape via the interactions of its cytoplasmic domain with cytoskeletal proteins, glycolytic enzymes, and hemoglobin. Functions as a transporter that mediates the 1:1 exchange of inorganic anions across the erythrocyte membrane. Mediates chloride-bicarbonate exchange in the kidney, and is required for normal acidification of the urine. The polypeptide is Band 3 anion transport protein (SLC4A1) (Gallus gallus (Chicken)).